Here is a 140-residue protein sequence, read N- to C-terminus: Class I hydrophobin B (140 aa).

The signal sequence occupies residues 1-16 (MKFLAVVSLLAATALA). 4 disulfides stabilise this stretch: cysteine 42-cysteine 113, cysteine 50-cysteine 107, cysteine 51-cysteine 88, and cysteine 114-cysteine 133. Residue asparagine 117 is glycosylated (N-linked (GlcNAc...) asparagine).

This sequence belongs to the fungal hydrophobin family. Self-assembles to form functional amyloid fibrils called rodlets. Self-assembly into fibrillar rodlets occurs spontaneously at hydrophobic:hydrophilic interfaces and the rodlets further associate laterally to form amphipathic monolayers.

The protein resides in the secreted. Its subcellular location is the spore wall. Aerial growth, conidiation, and dispersal of filamentous fungi in the environment rely upon a capability of their secreting small amphipathic proteins called hydrophobins (HPBs) with low sequence identity. Class I can self-assemble into an outermost layer of rodlet bundles on aerial cell surfaces, conferring cellular hydrophobicity that supports fungal growth, development and dispersal; whereas Class II form highly ordered films at water-air interfaces through intermolecular interactions but contribute nothing to the rodlet structure. RodB is a class I hydrophobin that, unlike rodA, is not required for rodlet formation. This chain is Class I hydrophobin B, found in Aspergillus fumigatus (strain ATCC MYA-4609 / CBS 101355 / FGSC A1100 / Af293) (Neosartorya fumigata).